Reading from the N-terminus, the 148-residue chain is Large ribosomal subunit protein bL9 (148 aa).

Belongs to the bacterial ribosomal protein bL9 family.

In terms of biological role, binds to the 23S rRNA. This Acidithiobacillus ferrooxidans (strain ATCC 23270 / DSM 14882 / CIP 104768 / NCIMB 8455) (Ferrobacillus ferrooxidans (strain ATCC 23270)) protein is Large ribosomal subunit protein bL9.